The chain runs to 374 residues: MYLENLVLHDFRNYADLTINFSQGVNVLLGENAQGKTNLLEAIYVLALTRSHRTANDKELIRWQTTTATLQGRLHKSTGAVPLELELGRRGKRAKVNHLEQAKLSQYVGNLNVIVFAPEDLSIVKGAPAVRRRFMDMEFGQMSPKYLYNLSQYRTILKQRNQYLRQLNRQQAKDKVYLGVLSDQLAAFGAEIIHKRLQLLQQLEKWAQAVHSEITQEQEQLTFHYVTQVPTADQTSVDHIYQTLQALYQQQQAKEIFQGTTLLGPHRDDLQFGVNGKNVQTFGSQGQQRTTALSVKLAEIDLMKAETGEYPVLLLDDVLSELDAARQTHLLTAIQDKVQTFLTTPSLDGVARKLINAPKVFEVSHGTLHEEEPH.

30–37 (GENAQGKT) contributes to the ATP binding site.

This sequence belongs to the RecF family.

Its subcellular location is the cytoplasm. In terms of biological role, the RecF protein is involved in DNA metabolism; it is required for DNA replication and normal SOS inducibility. RecF binds preferentially to single-stranded, linear DNA. It also seems to bind ATP. The sequence is that of DNA replication and repair protein RecF from Lactiplantibacillus plantarum (strain ATCC BAA-793 / NCIMB 8826 / WCFS1) (Lactobacillus plantarum).